A 73-amino-acid polypeptide reads, in one-letter code: Long neurotoxin 3 (73 aa).

Intrachain disulfides connect C3–C21, C14–C42, C27–C31, C46–C57, and C58–C63.

It belongs to the three-finger toxin family. Long-chain subfamily. Type II alpha-neurotoxin sub-subfamily. As to expression, expressed by the venom gland.

Its subcellular location is the secreted. Its function is as follows. Binds with high affinity to muscular (alpha-1/CHRNA1) and neuronal (alpha-7/CHRNA7) nicotinic acetylcholine receptor (nAChR) and inhibits acetylcholine from binding to the receptor, thereby impairing neuromuscular and neuronal transmission. In Ophiophagus hannah (King cobra), this protein is Long neurotoxin 3.